The sequence spans 814 residues: Ubiquitin carboxyl-terminal hydrolase 45 (814 aa).

The span at 1–14 (MRVKDPTKALPEKA) shows a compositional bias: basic and acidic residues. Residues 1-28 (MRVKDPTKALPEKAKRSKRPTVPHDEDS) form a disordered region. The interaction with ERCC1 stretch occupies residues 1–62 (MRVKDPTKAL…AIAENLWSVC (62 aa)). A phosphoserine mark is found at Ser28 and Ser29. A UBP-type zinc finger spans residues 36-153 (LTCQHVSHAI…AQIVDFLQKH (118 aa)). Zn(2+) is bound by residues Cys38, His40, Cys62, Cys65, Cys85, Cys88, Cys93, His101, His105, His114, Cys127, and Cys130. Residues 190–813 (RGITNLGNTC…QAYLLFYERV (624 aa)) form the USP domain. The active-site Nucleophile is the Cys199. Disordered regions lie at residues 418-443 (IENI…IHDR) and 479-533 (ESRL…PDGP). Residues 432–443 (SSKDKSQLIHDR) show a composition bias toward basic and acidic residues. A phosphoserine mark is found at Ser508 and Ser526. The segment covering 515-527 (KQTGLFRSSSGSG) has biased composition (polar residues). The active-site Proton acceptor is the His746.

This sequence belongs to the peptidase C19 family. In terms of assembly, interacts with ERCC1. The catalytically active form interacts with SPDL1. In terms of tissue distribution, widely expressed. High expression is detected in the cerebellum. In the eye, it is expressed at high levels in the optic nerve, sclera and retina, with relatively low levels in the choroid, lens and retinal pigment epithelium.

It localises to the photoreceptor inner segment. Its subcellular location is the cytoplasm. The protein resides in the nucleus. The catalysed reaction is Thiol-dependent hydrolysis of ester, thioester, amide, peptide and isopeptide bonds formed by the C-terminal Gly of ubiquitin (a 76-residue protein attached to proteins as an intracellular targeting signal).. Its function is as follows. Catalyzes the deubiquitination of SPDL1. Plays a role in the repair of UV-induced DNA damage via deubiquitination of ERCC1, promoting its recruitment to DNA damage sites. May be involved in the maintenance of photoreceptor function. May play a role in normal retinal development. Plays a role in cell migration. In Homo sapiens (Human), this protein is Ubiquitin carboxyl-terminal hydrolase 45 (USP45).